We begin with the raw amino-acid sequence, 473 residues long: 3-isopropylmalate dehydratase large subunit (473 aa).

Positions 351, 414, and 417 each coordinate [4Fe-4S] cluster.

This sequence belongs to the aconitase/IPM isomerase family. LeuC type 1 subfamily. Heterodimer of LeuC and LeuD. Requires [4Fe-4S] cluster as cofactor.

The catalysed reaction is (2R,3S)-3-isopropylmalate = (2S)-2-isopropylmalate. It participates in amino-acid biosynthesis; L-leucine biosynthesis; L-leucine from 3-methyl-2-oxobutanoate: step 2/4. In terms of biological role, catalyzes the isomerization between 2-isopropylmalate and 3-isopropylmalate, via the formation of 2-isopropylmaleate. The sequence is that of 3-isopropylmalate dehydratase large subunit from Polaromonas sp. (strain JS666 / ATCC BAA-500).